We begin with the raw amino-acid sequence, 150 residues long: U1 small nuclear ribonucleoprotein C (150 aa).

The Matrin-type zinc-finger motif lies at 4 to 36 (YYCDYCKSYLTHDTMSVRKSHLQGRNHIKFYCD). The disordered stretch occupies residues 66-132 (SDAKKSNGSS…GLPLPPPAVY (67 aa)). The segment covering 80–92 (DIDKKENSSDHNK) has biased composition (basic and acidic residues). A compositionally biased stretch (acidic residues) spans 103 to 112 (NDNDDDDDEM). Residues 115 to 130 (LPPPPNLSGLPLPPPA) are compositionally biased toward pro residues.

Belongs to the U1 small nuclear ribonucleoprotein C family. As to quaternary structure, U1 snRNP is composed of the 7 core Sm proteins B/B', D1, D2, D3, E, F and G that assemble in a heptameric protein ring on the Sm site of the small nuclear RNA to form the core snRNP, and at least 3 U1 snRNP-specific proteins U1-70K, U1-A and U1-C. U1-C interacts with U1 snRNA and the 5' splice-site region of the pre-mRNA.

The protein resides in the nucleus. Functionally, component of the spliceosomal U1 snRNP, which is essential for recognition of the pre-mRNA 5' splice-site and the subsequent assembly of the spliceosome. U1-C is directly involved in initial 5' splice-site recognition for both constitutive and regulated alternative splicing. The interaction with the 5' splice-site seems to precede base-pairing between the pre-mRNA and the U1 snRNA. Stimulates commitment or early (E) complex formation by stabilizing the base pairing of the 5' end of the U1 snRNA and the 5' splice-site region. The sequence is that of U1 small nuclear ribonucleoprotein C from Candida albicans (strain SC5314 / ATCC MYA-2876) (Yeast).